The following is a 311-amino-acid chain: MALPILLDCDPGHDDAIAIVLALASPELDVKAITSSAGNQTPEKTLRNVLRMLTLLNRTDIPVAGGAVKPLMRELIIADNVHGESGLDGPALPEPTFAPQNCTAVELMAKTLRESAEPVTIVSTGPQTNVALLLNSHPELHSKIARIVIMGGAMGLGNWTPAAEFNIYVDPEAAEIVFQSGIPVVMAGLDVTHKAQIHVEDTERFRAIGNPVSTIVAELLDFFLEYHKDEKWGFVGAPLHDPCTIAWLLKPELFTSVERWVGVETQGKYTQGMTVVDYYYLTGNKPNATVMVDVDRQGFVDLLADRLKFYA.

H240 is an active-site residue.

The protein belongs to the IUNH family. RihA subfamily.

Functionally, hydrolyzes with equal efficiency cytidine or uridine to ribose and cytosine or uracil, respectively. The protein is Pyrimidine-specific ribonucleoside hydrolase RihA of Escherichia coli (strain K12 / MC4100 / BW2952).